A 116-amino-acid polypeptide reads, in one-letter code: Flagellar transcriptional regulator FlhD (116 aa).

The protein belongs to the FlhD family. In terms of assembly, homodimer; disulfide-linked. Forms a heterohexamer composed of two FlhC and four FlhD subunits. Each FlhC binds a FlhD dimer, forming a heterotrimer, and a hexamer assembles by dimerization of two heterotrimers.

It localises to the cytoplasm. Functionally, functions in complex with FlhC as a master transcriptional regulator that regulates transcription of several flagellar and non-flagellar operons by binding to their promoter region. Activates expression of class 2 flagellar genes, including fliA, which is a flagellum-specific sigma factor that turns on the class 3 genes. Also regulates genes whose products function in a variety of physiological pathways. In Xenorhabdus nematophila (Achromobacter nematophilus), this protein is Flagellar transcriptional regulator FlhD.